We begin with the raw amino-acid sequence, 637 residues long: DNA mismatch repair protein MutL (637 aa).

Residues 343–352 are compositionally biased toward polar residues; sequence QQSPDRQVSP. The segment at 343–411 is disordered; that stretch reads QQSPDRQVSP…SARNGDVSLP (69 aa). Positions 365–380 are enriched in basic and acidic residues; sequence SIERKPSVSYDVRDSH. Over residues 388–397 the composition is skewed to low complexity; sequence YSSGSSSYRS.

It belongs to the DNA mismatch repair MutL/HexB family.

This protein is involved in the repair of mismatches in DNA. It is required for dam-dependent methyl-directed DNA mismatch repair. May act as a 'molecular matchmaker', a protein that promotes the formation of a stable complex between two or more DNA-binding proteins in an ATP-dependent manner without itself being part of a final effector complex. The protein is DNA mismatch repair protein MutL of Shewanella halifaxensis (strain HAW-EB4).